The chain runs to 371 residues: D-erythrose-4-phosphate dehydrogenase (371 aa).

Residue Arg-12 to Ile-13 coordinates NAD(+). Residues Ser-154–Thr-156, Arg-200, Thr-213–Lys-214, and Arg-236 contribute to the substrate site. Cys-155 acts as the Nucleophile in catalysis. NAD(+) is bound at residue Asn-318.

It belongs to the glyceraldehyde-3-phosphate dehydrogenase family. Epd subfamily. In terms of assembly, homotetramer.

The protein resides in the cytoplasm. It carries out the reaction D-erythrose 4-phosphate + NAD(+) + H2O = 4-phospho-D-erythronate + NADH + 2 H(+). It functions in the pathway cofactor biosynthesis; pyridoxine 5'-phosphate biosynthesis; pyridoxine 5'-phosphate from D-erythrose 4-phosphate: step 1/5. Catalyzes the NAD-dependent conversion of D-erythrose 4-phosphate to 4-phosphoerythronate. The chain is D-erythrose-4-phosphate dehydrogenase from Psychromonas ingrahamii (strain DSM 17664 / CCUG 51855 / 37).